A 417-amino-acid polypeptide reads, in one-letter code: Gamma-glutamyl phosphate reductase (417 aa).

Belongs to the gamma-glutamyl phosphate reductase family.

It localises to the cytoplasm. It carries out the reaction L-glutamate 5-semialdehyde + phosphate + NADP(+) = L-glutamyl 5-phosphate + NADPH + H(+). The protein operates within amino-acid biosynthesis; L-proline biosynthesis; L-glutamate 5-semialdehyde from L-glutamate: step 2/2. In terms of biological role, catalyzes the NADPH-dependent reduction of L-glutamate 5-phosphate into L-glutamate 5-semialdehyde and phosphate. The product spontaneously undergoes cyclization to form 1-pyrroline-5-carboxylate. The protein is Gamma-glutamyl phosphate reductase of Photorhabdus laumondii subsp. laumondii (strain DSM 15139 / CIP 105565 / TT01) (Photorhabdus luminescens subsp. laumondii).